The sequence spans 1755 residues: Transposon Ty1-GR2 Gag-Pol polyprotein (1755 aa).

A compositionally biased stretch (low complexity) spans 1 to 16; sequence MESQQLSQHSHISHGS. Disordered stretches follow at residues 1-93, 126-173, and 352-421; these read MESQ…MMTQ, PQSQ…RPPP, and GSRN…SKST. Composition is skewed to polar residues over residues 48-60 and 127-152; these read TKAN…TPAS and QSQF…GNTF. The span at 153-165 shows a compositional bias: low complexity; it reads TDSSSADSDMTST. The interval 299-401 is RNA-binding; it reads NNGIHINNKV…NSKSKTARAH (103 aa). Over residues 402 to 418 the composition is skewed to low complexity; the sequence is NVSTSNNSPSTDNDSIS. Residue Ser-416 is modified to Phosphoserine. Asp-461 (for protease activity; shared with dimeric partner) is an active-site residue. The interval 583–640 is integrase-type zinc finger-like; sequence NVHTSESTRKYPYPFIHRMLAHANAQTIRYSLKNNTITYFNESDVDWSSAIDYQCPDC. Positions 660–835 constitute an Integrase catalytic domain; sequence NSYEPFQYLH…AGLDISTLLP (176 aa). Residues Asp-671 and Asp-736 each contribute to the Mg(2+) site. Disordered stretches follow at residues 956-1087, 1092-1111, and 1130-1187; these read SKAV…ETEK, RSPS…NIVP, and DLPL…DNET. A compositionally biased stretch (low complexity) spans 960–969; it reads SPTDSTPPST. Residues 1005–1015 are compositionally biased toward polar residues; sequence STPQISNIEST. The segment covering 1038–1053 has biased composition (basic and acidic residues); sequence ESSHASKSKDFRHSDS. 2 stretches are compositionally biased toward polar residues: residues 1054–1082 and 1101–1111; these read YSEN…QISD and PENNSSHNIVP. Residues 1178–1212 carry the Bipartite nuclear localization signal motif; it reads KKRSLEDNETEIKVSRDTWNTKNMRSLEPPRSKKR. The Reverse transcriptase Ty1/copia-type domain maps to 1338 to 1476; sequence NNYYITQLDI…DILGLEIKYQ (139 aa). 6 residues coordinate Mg(2+): Asp-1346, Asp-1427, Asp-1428, Asp-1610, Glu-1652, and Asp-1685. The RNase H Ty1/copia-type domain occupies 1610 to 1752; it reads DASYGNQPYY…IKTFKLLTNK (143 aa).

The capsid protein forms a homotrimer, from which the VLPs are assembled. The protease is a homodimer, whose active site consists of two apposed aspartic acid residues. Initially, virus-like particles (VLPs) are composed of the structural unprocessed proteins Gag and Gag-Pol, and also contain the host initiator methionine tRNA (tRNA(i)-Met) which serves as a primer for minus-strand DNA synthesis, and a dimer of genomic Ty RNA. Processing of the polyproteins occurs within the particle and proceeds by an ordered pathway, called maturation. First, the protease (PR) is released by autocatalytic cleavage of the Gag-Pol polyprotein yielding capsid protein p45 and a Pol-p154 precursor protein. This cleavage is a prerequisite for subsequent processing of Pol-p154 at the remaining sites to release the mature structural and catalytic proteins. Maturation takes place prior to the RT reaction and is required to produce transposition-competent VLPs.

It localises to the cytoplasm. The protein localises to the nucleus. The enzyme catalyses DNA(n) + a 2'-deoxyribonucleoside 5'-triphosphate = DNA(n+1) + diphosphate. It carries out the reaction Endonucleolytic cleavage to 5'-phosphomonoester.. Functionally, capsid protein (CA) is the structural component of the virus-like particle (VLP), forming the shell that encapsulates the retrotransposons dimeric RNA genome. The particles are assembled from trimer-clustered units and there are holes in the capsid shells that allow for the diffusion of macromolecules. CA also has nucleocapsid-like chaperone activity, promoting primer tRNA(i)-Met annealing to the multipartite primer-binding site (PBS), dimerization of Ty1 RNA and initiation of reverse transcription. Its function is as follows. The aspartyl protease (PR) mediates the proteolytic cleavages of the Gag and Gag-Pol polyproteins after assembly of the VLP. In terms of biological role, reverse transcriptase/ribonuclease H (RT) is a multifunctional enzyme that catalyzes the conversion of the retro-elements RNA genome into dsDNA within the VLP. The enzyme displays a DNA polymerase activity that can copy either DNA or RNA templates, and a ribonuclease H (RNase H) activity that cleaves the RNA strand of RNA-DNA heteroduplexes during plus-strand synthesis and hydrolyzes RNA primers. The conversion leads to a linear dsDNA copy of the retrotransposon that includes long terminal repeats (LTRs) at both ends. Integrase (IN) targets the VLP to the nucleus, where a subparticle preintegration complex (PIC) containing at least integrase and the newly synthesized dsDNA copy of the retrotransposon must transit the nuclear membrane. Once in the nucleus, integrase performs the integration of the dsDNA into the host genome. The chain is Transposon Ty1-GR2 Gag-Pol polyprotein (TY1B-GR2) from Saccharomyces cerevisiae (strain ATCC 204508 / S288c) (Baker's yeast).